Here is a 193-residue protein sequence, read N- to C-terminus: Chlorate reductase assembly chaperone protein (193 aa).

It belongs to the type II DMSO reductase enzyme chaperone family.

Its subcellular location is the cytoplasm. May function as a system-specific chaperone protein essential for the assembly of an active chlorate reductase ClrABC. This Ideonella dechloratans protein is Chlorate reductase assembly chaperone protein (clrD).